The sequence spans 421 residues: Histidine--tRNA ligase (421 aa).

This sequence belongs to the class-II aminoacyl-tRNA synthetase family. In terms of assembly, homodimer.

It is found in the cytoplasm. The catalysed reaction is tRNA(His) + L-histidine + ATP = L-histidyl-tRNA(His) + AMP + diphosphate + H(+). This Coxiella burnetii (strain CbuK_Q154) (Coxiella burnetii (strain Q154)) protein is Histidine--tRNA ligase.